Reading from the N-terminus, the 94-residue chain is Large ribosomal subunit protein bL31 (94 aa).

The tract at residues 65–94 (YGMADSENDSTDKKKTTNEKKVSDSPSKES) is disordered. Over residues 74 to 94 (STDKKKTTNEKKVSDSPSKES) the composition is skewed to basic and acidic residues.

The protein belongs to the bacterial ribosomal protein bL31 family. Type A subfamily. As to quaternary structure, part of the 50S ribosomal subunit.

Functionally, binds the 23S rRNA. The sequence is that of Large ribosomal subunit protein bL31 from Prochlorococcus marinus (strain MIT 9211).